The following is a 511-amino-acid chain: Glutamate/gamma-aminobutyrate antiporter (511 aa).

Topologically, residues 1 to 14 (MATLVQTGKAKQLT) are cytoplasmic. A helical membrane pass occupies residues 15 to 35 (LLGFFAITASMVMAVYEYPTF). Residues 36-41 (ATSGFS) lie on the Periplasmic side of the membrane. Residues 42–62 (LVFFLLLGGILWFIPVGLCAA) traverse the membrane as a helical segment. Residues 63-93 (EMATVDGWEEGGVFAWVSNTLGPRWGFAAIS) are Cytoplasmic-facing. The chain crosses the membrane as a helical span at residues 94–114 (FGYLQIAIGFIPMLYFVLGAL). Residues 115-127 (SYILKWPALNEDP) lie on the Periplasmic side of the membrane. Residues 128-148 (ITKTIAALIILWALALTQFGG) traverse the membrane as a helical segment. Over 149–157 (TKYTARIAK) the chain is Cytoplasmic. A helical transmembrane segment spans residues 158–178 (VGFFAGILLPAFILIALAAIY). Residues 179 to 200 (LHSGAPVAIEMDSKTFFPDFSK) are Periplasmic-facing. The chain crosses the membrane as a helical span at residues 201 to 221 (VGTLVVFVAFILSYMGVEASA). The Cytoplasmic segment spans residues 222–239 (THVNEMSNPGRDYPLAML). The chain crosses the membrane as a helical span at residues 240–260 (LLMVAAICLSSVGGLSIAMVI). Topologically, residues 261-291 (PGNEINLSAGVMQTFTVLMSHVAPEIEWTVR) are periplasmic. Residues 292-312 (VISALLLLGVLAEIASWIVGP) traverse the membrane as a helical segment. Topologically, residues 313–335 (SRGMYVTAQKNLLPAAFAKMNKN) are cytoplasmic. The helical transmembrane segment at 336–356 (GVPVTLVISQLVITSIALIIL) threads the bilayer. Over 357–366 (TNTGGGNNMS) the chain is Periplasmic. A helical transmembrane segment spans residues 367-387 (FLIALALTVVIYLCAYFMLFI). Residues 388-412 (GYIVLVLKHPDLKRTFNIPGGKGVK) are Cytoplasmic-facing. A helical transmembrane segment spans residues 413–433 (LVVAIVGLLTSIMAFIVSFLP). At 434-445 (PDNIQGDSTDMY) the chain is on the periplasmic side. Residues 446–466 (VELLVVSFLVVLALPFILYAV) form a helical membrane-spanning segment. Residues 467–511 (HDRKGKANTGVTLEPINSQNAPKGHFFLHPRARSPHYIVMNDKKH) are Cytoplasmic-facing.

It belongs to the amino acid-polyamine-organocation (APC) superfamily. Glutamate:GABA antiporter (GGA) (TC 2.A.3.7) family.

It localises to the cell inner membrane. The catalysed reaction is 4-aminobutanoate(in) + L-glutamate(out) = 4-aminobutanoate(out) + L-glutamate(in). Shows pH-dependent activity. The glutamate analog L-trans-pyrrolidine-2,4-dicarboxylic acid (L-PDC) blocks the uptake of glutamate by selective inhibition. Functionally, involved in glutaminase-dependent acid resistance. Exchanges extracellular glutamate (Glu) for intracellular gamma-aminobutyric acid (GABA) under acidic conditions. The ability to survive the extremely acidic conditions of the stomach is essential for successful colonization of the host by commensal and pathogenic bacteria. This chain is Glutamate/gamma-aminobutyrate antiporter (gadC), found in Escherichia coli O157:H7.